Reading from the N-terminus, the 367-residue chain is Probable 7-methylxanthine methyltransferase 2 (367 aa).

Position 20 (Tyr-20) interacts with S-adenosyl-L-homocysteine. Residue Thr-27 coordinates theobromine. Residues Cys-64, Gln-69, Asp-101, Leu-102, Ser-134, and Phe-135 each contribute to the S-adenosyl-L-homocysteine site. Residues Tyr-152, His-155, and Trp-156 each contribute to the theobromine site. Positions 172, 258, 260, and 261 each coordinate Mg(2+). A theobromine-binding site is contributed by Phe-313.

It belongs to the methyltransferase superfamily. Type-7 methyltransferase family. Mg(2+) serves as cofactor.

The catalysed reaction is 7-methylxanthine + S-adenosyl-L-methionine = theobromine + S-adenosyl-L-homocysteine + H(+). The protein operates within alkaloid biosynthesis. Functionally, involved in the biosynthesis of theobromine. This Theobroma cacao (Cacao) protein is Probable 7-methylxanthine methyltransferase 2.